Consider the following 265-residue polypeptide: Diphthine synthase (265 aa).

S-adenosyl-L-methionine is bound by residues Leu9, Asp85, Ile88, 113–114 (TA), Leu168, Ala211, and His236.

The protein belongs to the diphthine synthase family. Homodimer.

It carries out the reaction 2-[(3S)-amino-3-carboxypropyl]-L-histidyl-[translation elongation factor 2] + 3 S-adenosyl-L-methionine = diphthine-[translation elongation factor 2] + 3 S-adenosyl-L-homocysteine + 3 H(+). It functions in the pathway protein modification; peptidyl-diphthamide biosynthesis. Functionally, S-adenosyl-L-methionine-dependent methyltransferase that catalyzes the trimethylation of the amino group of the modified target histidine residue in translation elongation factor 2 (EF-2), to form an intermediate called diphthine. The three successive methylation reactions represent the second step of diphthamide biosynthesis. This chain is Diphthine synthase, found in Halorubrum lacusprofundi (strain ATCC 49239 / DSM 5036 / JCM 8891 / ACAM 34).